Consider the following 373-residue polypeptide: 3-dehydroquinate synthase (373 aa).

NAD(+) contacts are provided by residues 74-79, 108-112, 132-133, Lys-145, Lys-154, and 172-175; these read DAEAGK, GAATD, TT, and TLET. Zn(2+) contacts are provided by Glu-187, His-250, and His-266.

This sequence belongs to the sugar phosphate cyclases superfamily. Dehydroquinate synthase family. Co(2+) is required as a cofactor. Zn(2+) serves as cofactor. It depends on NAD(+) as a cofactor.

Its subcellular location is the cytoplasm. It catalyses the reaction 7-phospho-2-dehydro-3-deoxy-D-arabino-heptonate = 3-dehydroquinate + phosphate. It participates in metabolic intermediate biosynthesis; chorismate biosynthesis; chorismate from D-erythrose 4-phosphate and phosphoenolpyruvate: step 2/7. Catalyzes the conversion of 3-deoxy-D-arabino-heptulosonate 7-phosphate (DAHP) to dehydroquinate (DHQ). In Nocardia farcinica (strain IFM 10152), this protein is 3-dehydroquinate synthase.